The chain runs to 132 residues: Small ribosomal subunit protein uS8 (132 aa).

This sequence belongs to the universal ribosomal protein uS8 family. As to quaternary structure, part of the 30S ribosomal subunit. Contacts proteins S5 and S12.

Functionally, one of the primary rRNA binding proteins, it binds directly to 16S rRNA central domain where it helps coordinate assembly of the platform of the 30S subunit. This is Small ribosomal subunit protein uS8 from Bacillus cytotoxicus (strain DSM 22905 / CIP 110041 / 391-98 / NVH 391-98).